We begin with the raw amino-acid sequence, 169 residues long: NADH-quinone oxidoreductase subunit B (169 aa).

[4Fe-4S] cluster contacts are provided by cysteine 42, cysteine 43, cysteine 107, and cysteine 136.

Belongs to the complex I 20 kDa subunit family. As to quaternary structure, NDH-1 is composed of 14 different subunits. Subunits NuoB, C, D, E, F, and G constitute the peripheral sector of the complex. It depends on [4Fe-4S] cluster as a cofactor.

It is found in the cell inner membrane. It catalyses the reaction a quinone + NADH + 5 H(+)(in) = a quinol + NAD(+) + 4 H(+)(out). Its function is as follows. NDH-1 shuttles electrons from NADH, via FMN and iron-sulfur (Fe-S) centers, to quinones in the respiratory chain. The immediate electron acceptor for the enzyme in this species is believed to be ubiquinone. Couples the redox reaction to proton translocation (for every two electrons transferred, four hydrogen ions are translocated across the cytoplasmic membrane), and thus conserves the redox energy in a proton gradient. The polypeptide is NADH-quinone oxidoreductase subunit B (Nitratiruptor sp. (strain SB155-2)).